The following is a 232-amino-acid chain: Histone H1.X (232 aa).

One can recognise an H15 domain in the interval 36–112 (HHPSYMDMIK…GATGSFRMGK (77 aa)). The interval 142-232 (ISKAEKTKPS…LRTGTRKSYC (91 aa)) is disordered. Residues 159–197 (KKGKPISTMKKRGVMSKKRSSKNKMAPKAKSHGLKKKGP) show a composition bias toward basic residues.

It belongs to the histone H1/H5 family.

It localises to the nucleus. The protein localises to the chromosome. The sequence is that of Histone H1.X (hil-1) from Caenorhabditis elegans.